A 689-amino-acid chain; its full sequence is Glycine--tRNA ligase beta subunit (689 aa).

It belongs to the class-II aminoacyl-tRNA synthetase family. As to quaternary structure, tetramer of two alpha and two beta subunits.

It is found in the cytoplasm. It catalyses the reaction tRNA(Gly) + glycine + ATP = glycyl-tRNA(Gly) + AMP + diphosphate. The polypeptide is Glycine--tRNA ligase beta subunit (Salmonella arizonae (strain ATCC BAA-731 / CDC346-86 / RSK2980)).